Here is a 496-residue protein sequence, read N- to C-terminus: Glutamyl-tRNA(Gln) amidotransferase subunit A, mitochondrial (496 aa).

Residues Lys75 and Ser162 each act as charge relay system in the active site. The Acyl-ester intermediate role is filled by Ser186.

This sequence belongs to the amidase family. GatA subfamily. In terms of assembly, subunit of the heterotrimeric GatCAB amidotransferase (AdT) complex, composed of A, B and C subunits.

It localises to the mitochondrion. It catalyses the reaction L-glutamyl-tRNA(Gln) + L-glutamine + ATP + H2O = L-glutaminyl-tRNA(Gln) + L-glutamate + ADP + phosphate + H(+). Its function is as follows. Allows the formation of correctly charged Gln-tRNA(Gln) through the transamidation of misacylated Glu-tRNA(Gln) in the mitochondria. The reaction takes place in the presence of glutamine and ATP through an activated gamma-phospho-Glu-tRNA(Gln). This is Glutamyl-tRNA(Gln) amidotransferase subunit A, mitochondrial from Pediculus humanus subsp. corporis (Body louse).